Consider the following 332-residue polypeptide: Probable isoaspartyl peptidase/L-asparaginase CG7860 (332 aa).

Residue Thr-188 is the Nucleophile of the active site. Substrate is bound by residues Arg-216–Asp-219 and Thr-239–Gly-242.

It belongs to the Ntn-hydrolase family. In terms of assembly, heterodimer of an alpha and beta chain produced by autocleavage. In terms of processing, cleaved into an alpha and beta chain by autocatalysis; this activates the enzyme. The N-terminal residue of the beta subunit is responsible for the nucleophile hydrolase activity.

The catalysed reaction is L-asparagine + H2O = L-aspartate + NH4(+). It carries out the reaction Cleavage of a beta-linked Asp residue from the N-terminus of a polypeptide.. In terms of biological role, has both L-asparaginase and beta-aspartyl peptidase activity. Does not have aspartylglucosaminidase activity and is inactive toward GlcNAc-L-Asn. Likewise, has no activity toward glutamine. In Drosophila melanogaster (Fruit fly), this protein is Probable isoaspartyl peptidase/L-asparaginase CG7860.